We begin with the raw amino-acid sequence, 209 residues long: Imidazole glycerol phosphate synthase subunit HisH (209 aa).

Residues 1–205 (MIAIIDYGMG…KGVVETWKSS (205 aa)) form the Glutamine amidotransferase type-1 domain. C79 acts as the Nucleophile in catalysis. Catalysis depends on residues H180 and E182.

As to quaternary structure, heterodimer of HisH and HisF.

Its subcellular location is the cytoplasm. It catalyses the reaction 5-[(5-phospho-1-deoxy-D-ribulos-1-ylimino)methylamino]-1-(5-phospho-beta-D-ribosyl)imidazole-4-carboxamide + L-glutamine = D-erythro-1-(imidazol-4-yl)glycerol 3-phosphate + 5-amino-1-(5-phospho-beta-D-ribosyl)imidazole-4-carboxamide + L-glutamate + H(+). It carries out the reaction L-glutamine + H2O = L-glutamate + NH4(+). The protein operates within amino-acid biosynthesis; L-histidine biosynthesis; L-histidine from 5-phospho-alpha-D-ribose 1-diphosphate: step 5/9. IGPS catalyzes the conversion of PRFAR and glutamine to IGP, AICAR and glutamate. The HisH subunit catalyzes the hydrolysis of glutamine to glutamate and ammonia as part of the synthesis of IGP and AICAR. The resulting ammonia molecule is channeled to the active site of HisF. The chain is Imidazole glycerol phosphate synthase subunit HisH from Bacillus anthracis (strain CDC 684 / NRRL 3495).